The primary structure comprises 61 residues: Small ribosomal subunit protein uS14 (61 aa).

Residues C24, C27, C40, and C43 each contribute to the Zn(2+) site.

This sequence belongs to the universal ribosomal protein uS14 family. Zinc-binding uS14 subfamily. As to quaternary structure, part of the 30S ribosomal subunit. Contacts proteins S3 and S10. It depends on Zn(2+) as a cofactor.

Functionally, binds 16S rRNA, required for the assembly of 30S particles and may also be responsible for determining the conformation of the 16S rRNA at the A site. The sequence is that of Small ribosomal subunit protein uS14 from Syntrophotalea carbinolica (strain DSM 2380 / NBRC 103641 / GraBd1) (Pelobacter carbinolicus).